Consider the following 287-residue polypeptide: GTPase Era (287 aa).

An Era-type G domain is found at 6-178 (FSGTSVIIGK…IQNKLKIVPK (173 aa)). The interval 14–21 (GKPNVGKS) is G1. 14–21 (GKPNVGKS) lines the GTP pocket. The tract at residues 40 to 44 (HTTQS) is G2. The G3 stretch occupies residues 62–65 (DTPG). Residues 62–66 (DTPGI) and 124–127 (NKID) each bind GTP. Residues 124–127 (NKID) are G4. The G5 stretch occupies residues 154 to 156 (ISG). Positions 207–282 (LGDELPYSIQ…SIYLSLKVIK (76 aa)) constitute a KH type-2 domain.

The protein belongs to the TRAFAC class TrmE-Era-EngA-EngB-Septin-like GTPase superfamily. Era GTPase family. As to quaternary structure, monomer.

The protein resides in the cytoplasm. The protein localises to the cell membrane. In terms of biological role, an essential GTPase that binds both GDP and GTP, with rapid nucleotide exchange. Plays a role in 16S rRNA processing and 30S ribosomal subunit biogenesis and possibly also in cell cycle regulation and energy metabolism. This is GTPase Era from Buchnera aphidicola subsp. Baizongia pistaciae (strain Bp).